An 805-amino-acid polypeptide reads, in one-letter code: Hypoxia-inducible factor 1-alpha (805 aa).

The segment at 1-26 is disordered; the sequence is MEGSVVVSEKKRISSERRKEKSRDAA. The span at 8–26 shows a compositional bias: basic and acidic residues; that stretch reads SEKKRISSERRKEKSRDAA. Residues 17 to 70 form the bHLH domain; that stretch reads RRKEKSRDAARCRRSNESEVFYELSHELPLPHNVSSHLDKASIMRLDHQLPAVE. PAS domains lie at 85–157 and 229–300; these read DKQL…PAKK and PHPS…TKGQ. The 44-residue stretch at 303-346 folds into the PAC domain; sequence TGQYRMLAKKGGYVWVETQATVIYNSKNSQPQCIVCVNYVLSEV. A 4-hydroxyproline mark is found at Pro-404 and Pro-560. A disordered region spans residues 628 to 669; sequence KESTSAPVSPYNGNRSRTSSPVRPAKAVVDKTEKSRPGTPNL. Residues 629-648 are compositionally biased toward polar residues; that stretch reads ESTSAPVSPYNGNRSRTSSP. Asn-782 carries the post-translational modification (3S)-3-hydroxyasparagine.

In terms of assembly, efficient DNA binding requires heterodimerization of an alpha and a beta/ARNT subunit. In terms of processing, in normoxia, is hydroxylated on Pro-404 and Pro-560. The hydroxylated prolines promote interaction with VHL, initiating rapid ubiquitination and subsequent proteasomal degradation. Under hypoxia, proline hydroxylation is impaired and ubiquitination is attenuated, resulting in stabilization. Post-translationally, in normoxia, is hydroxylated on Asn-782, thus abrogating interaction with CREBBP and EP300 and preventing transcriptional activation. The iron and 2-oxoglutarate dependent 3-hydroxylation of asparagine is (S) stereospecific within HIF CTAD domains.

It localises to the cytoplasm. Its subcellular location is the nucleus. The protein resides in the nucleus speckle. With respect to regulation, induced by reactive oxygen species (ROS). Its function is as follows. Functions as a master transcriptional regulator of the adaptive response to hypoxia. Under hypoxic conditions, activates the transcription of over 40 genes, including erythropoietin, glucose transporters, glycolytic enzymes, vascular endothelial growth factor, HILPDA, and other genes whose protein products increase oxygen delivery or facilitate metabolic adaptation to hypoxia. Plays an essential role in embryonic vascularization, tumor angiogenesis and pathophysiology of ischemic disease. The protein is Hypoxia-inducible factor 1-alpha (hif1a) of Xenopus laevis (African clawed frog).